Consider the following 422-residue polypeptide: L-threonine dehydratase biosynthetic IlvA (422 aa).

K56 is subject to N6-(pyridoxal phosphate)lysine. Pyridoxal 5'-phosphate-binding positions include N83, 189–193, and S315; that span reads GGGGL. The ACT-like domain occupies 339–413; sequence HYFILNFPQR…FDKSNIYINE (75 aa).

Belongs to the serine/threonine dehydratase family. Homotetramer. The cofactor is pyridoxal 5'-phosphate.

The enzyme catalyses L-threonine = 2-oxobutanoate + NH4(+). It functions in the pathway amino-acid biosynthesis; L-isoleucine biosynthesis; 2-oxobutanoate from L-threonine: step 1/1. Functionally, catalyzes the anaerobic formation of alpha-ketobutyrate and ammonia from threonine in a two-step reaction. The first step involved a dehydration of threonine and a production of enamine intermediates (aminocrotonate), which tautomerizes to its imine form (iminobutyrate). Both intermediates are unstable and short-lived. The second step is the nonenzymatic hydrolysis of the enamine/imine intermediates to form 2-ketobutyrate and free ammonia. In the low water environment of the cell, the second step is accelerated by RidA. The protein is L-threonine dehydratase biosynthetic IlvA (ilvA) of Staphylococcus saprophyticus subsp. saprophyticus (strain ATCC 15305 / DSM 20229 / NCIMB 8711 / NCTC 7292 / S-41).